Here is a 1024-residue protein sequence, read N- to C-terminus: Multidrug resistance protein MdtC (1024 aa).

11 helical membrane-spanning segments follow: residues 15-35 (WLLTLTIVLAGFLGFRLLPVA), 333-353 (EVEQSLAISVGLVVLVVFAFL), 360-380 (LIPAVAVPVSLIGTFAAMYLC), 387-407 (LSLMALTVATGFVVDDAIVVL), 431-451 (VGFTVISMSISLVAVFLPLLL), 463-483 (FAITLSVSIAISLVISLTLTP), 528-548 (WGLLVFVATLGLTVYLYISIP), 853-873 (LWLILAAIATVYIVLGILYES), 897-917 (LFNAPFSLIALIGILLLIGIV), 953-973 (PIIMTTLAALLGALPLALGSG), and 984-1004 (ITIVGGLVMSQLLTLFTTPVV).

This sequence belongs to the resistance-nodulation-cell division (RND) (TC 2.A.6) family. MdtC subfamily. Part of a tripartite efflux system composed of MdtA, MdtB and MdtC. MdtC forms a heteromultimer with MdtB.

Its subcellular location is the cell inner membrane. In Erwinia tasmaniensis (strain DSM 17950 / CFBP 7177 / CIP 109463 / NCPPB 4357 / Et1/99), this protein is Multidrug resistance protein MdtC.